Consider the following 261-residue polypeptide: MSKLIPAIKVNNLSFYYDTQKILEGVSMEIYQSKVTAIIGPSGCGKSTFLKCLNRMNELESEVRVEGRVEFFNQNIYERRVNLNRLRRQVSMVHPKPNLFPMSVYDNVAYGVKIVGWRPKLEIDDIVESALKDADLWDEIKHKIHKSALDLSGGQQQRLCIARALAVKPKVLLMDEPCFGLDPIASMKVESLIQSLRLRSELTMVIVSHNLPQISRISDFTAFFKGNESRIGQLVEFGLTKKIFNSPHDSRTREYVLSRLG.

The region spanning 8–256 (IKVNNLSFYY…PHDSRTREYV (249 aa)) is the ABC transporter domain. 40–47 (GPSGCGKS) contributes to the ATP binding site.

This sequence belongs to the ABC transporter superfamily. Phosphate importer (TC 3.A.1.7) family. As to quaternary structure, the complex is composed of two ATP-binding proteins (PstB), two transmembrane proteins (PstC and PstA) and a solute-binding protein (PstS).

It is found in the cell inner membrane. The enzyme catalyses phosphate(out) + ATP + H2O = ADP + 2 phosphate(in) + H(+). Part of the ABC transporter complex PstSACB involved in phosphate import. Responsible for energy coupling to the transport system. In Trichormus variabilis (strain ATCC 29413 / PCC 7937) (Anabaena variabilis), this protein is Phosphate import ATP-binding protein PstB 4.